A 114-amino-acid polypeptide reads, in one-letter code: Putative movement protein (114 aa).

Residues 27–47 (LIGIILLVTVCLTVLWVCIML) form a helical membrane-spanning segment. The tract at residues 79–114 (RTPFEATGPERERNWEARRQSTTVNPASQPNTGSVF) is disordered. The span at 86–97 (GPERERNWEARR) shows a compositional bias: basic and acidic residues. Over residues 98-114 (QSTTVNPASQPNTGSVF) the composition is skewed to polar residues.

The protein belongs to the nanovirus movement protein family.

Its subcellular location is the host cell membrane. Functionally, may transport viral genome to neighboring plant cells directly through plasmosdesmata, without any budding. The movement protein allows efficient cell to cell propagation, by bypassing the host cell wall barrier. The sequence is that of Putative movement protein (DNA-M) from Faba bean necrotic yellows virus (isolate Egyptian EV1-93) (FBNYV).